Here is a 221-residue protein sequence, read N- to C-terminus: Probable septum site-determining protein MinC (221 aa).

The protein belongs to the MinC family. In terms of assembly, interacts with MinD and FtsZ.

In terms of biological role, cell division inhibitor that blocks the formation of polar Z ring septums. Rapidly oscillates between the poles of the cell to destabilize FtsZ filaments that have formed before they mature into polar Z rings. Prevents FtsZ polymerization. The chain is Probable septum site-determining protein MinC from Aliivibrio fischeri (strain ATCC 700601 / ES114) (Vibrio fischeri).